The primary structure comprises 100 residues: Aspartyl/glutamyl-tRNA(Asn/Gln) amidotransferase subunit C (100 aa).

Belongs to the GatC family. As to quaternary structure, heterotrimer of A, B and C subunits.

The catalysed reaction is L-glutamyl-tRNA(Gln) + L-glutamine + ATP + H2O = L-glutaminyl-tRNA(Gln) + L-glutamate + ADP + phosphate + H(+). It carries out the reaction L-aspartyl-tRNA(Asn) + L-glutamine + ATP + H2O = L-asparaginyl-tRNA(Asn) + L-glutamate + ADP + phosphate + 2 H(+). Allows the formation of correctly charged Asn-tRNA(Asn) or Gln-tRNA(Gln) through the transamidation of misacylated Asp-tRNA(Asn) or Glu-tRNA(Gln) in organisms which lack either or both of asparaginyl-tRNA or glutaminyl-tRNA synthetases. The reaction takes place in the presence of glutamine and ATP through an activated phospho-Asp-tRNA(Asn) or phospho-Glu-tRNA(Gln). This Staphylococcus aureus (strain Newman) protein is Aspartyl/glutamyl-tRNA(Asn/Gln) amidotransferase subunit C.